Here is an 818-residue protein sequence, read N- to C-terminus: MSGSQNDDRRQFLLERLLDAVKQCQIRFGGRKEIASDSDSRVTCLCAQFEAVLQHGMKRSRGLALTAAAIKQAAGFTSKTETEPVFWVYVKEVLNKHELQRFYSLHHITSDAGRGRAWLRCALNEHSLERYLHMLLADRARLSTFYEDWSFVMDEERSSMLPTMAAGLNSILFAINIDNKDLNGQSKFAPTVSDLLKESTQNVTSLLKESTQGMSSLLREITASSAVSILIKPEQETDPLPVISKNVHVDTRCKRERRRRKKVTNIVSFDDDEEEQGTGDTLKKMPGTAESSEENSDRSSVNIMAAFEGTFGPNSNGSQSSSSWKIDSASLNGELGYQKLDVKSIDDDVDENEEDAYRSPLGRGHTGHAESPDRTLDGNACLAQVHGWAPLQVLHGDADADTDVLFPVSGVGSYGAADAPVGSLENGTGTENHIIPEPGLRYREASSPGQGSPLSSLLPSASVPESMTVHELRQAIVAMMNRKDELEEENGSLRNLLDGEMEHSAALRQEVDALRRKVTEQQERHATKVQALARENEVLKVQLKKYVGAVQMLKREGQTAEAVPSLWNVDAEVTVPEQKPGEVAEELASSYERKLIEVAEMHGELIEFNERLHRALVAKEALVSQMRQELIDLRGPVPGDLSQTSEDQSLSDFEISNRALINVWIPSVFLRGKAANAFHVYQVYIRIKDDEWNVYRRYTEFRALHHQLQSAFPQVRAYSFPPKKAIGNKDAKFVEERRKQLQSYLRSVMNKVIQMVPEFAANPKKETLVQLVPFFVDITPPGEPLNKSSRPKAVSRFPKLSRGHPREVRNVEPQSGDL.

The RUN domain maps to 36–180; that stretch reads SDSDSRVTCL…ILFAINIDNK (145 aa). The disordered stretch occupies residues 267–299; the sequence is VSFDDDEEEQGTGDTLKKMPGTAESSEENSDRS. 7 positions are modified to phosphoserine: S268, S291, S292, S330, S344, S447, and S452. 2 disordered regions span residues 343–375 and 441–462; these read KSID…PDRT and RYRE…PSAS. Positions 445–462 are enriched in low complexity; that stretch reads ASSPGQGSPLSSLLPSAS. The stretch at 467-547 forms a coiled coil; the sequence is MTVHELRQAI…VLKVQLKKYV (81 aa). S642 carries the phosphoserine modification. Phosphothreonine is present on T644. Phosphoserine occurs at positions 645 and 649. In terms of domain architecture, PX spans 659-782; sequence ALINVWIPSV…PFFVDITPPG (124 aa). The disordered stretch occupies residues 781–818; that stretch reads PGEPLNKSSRPKAVSRFPKLSRGHPREVRNVEPQSGDL.

The protein belongs to the sorting nexin family.

This chain is Sorting nexin-29 (Snx29), found in Mus musculus (Mouse).